A 180-amino-acid polypeptide reads, in one-letter code: Large ribosomal subunit protein uL5 (180 aa).

The protein belongs to the universal ribosomal protein uL5 family. As to quaternary structure, part of the 50S ribosomal subunit; part of the 5S rRNA/L5/L18/L25 subcomplex. Contacts the 5S rRNA and the P site tRNA. Forms a bridge to the 30S subunit in the 70S ribosome.

This is one of the proteins that bind and probably mediate the attachment of the 5S RNA into the large ribosomal subunit, where it forms part of the central protuberance. In the 70S ribosome it contacts protein S13 of the 30S subunit (bridge B1b), connecting the 2 subunits; this bridge is implicated in subunit movement. Contacts the P site tRNA; the 5S rRNA and some of its associated proteins might help stabilize positioning of ribosome-bound tRNAs. The chain is Large ribosomal subunit protein uL5 from Mycoplasma mycoides subsp. mycoides SC (strain CCUG 32753 / NCTC 10114 / PG1).